We begin with the raw amino-acid sequence, 396 residues long: Elongation factor Tu 2 (396 aa).

One can recognise a tr-type G domain in the interval Lys-10–Glu-206. The interval Gly-19–Thr-26 is G1. Gly-19–Thr-26 is a GTP binding site. Thr-26 is a binding site for Mg(2+). The G2 stretch occupies residues Gly-60 to Asn-64. The interval Asp-81–Gly-84 is G3. Residues Asp-81 to His-85 and Asn-136 to Asp-139 each bind GTP. The G4 stretch occupies residues Asn-136–Asp-139. A G5 region spans residues Ser-174–Lys-176.

This sequence belongs to the TRAFAC class translation factor GTPase superfamily. Classic translation factor GTPase family. EF-Tu/EF-1A subfamily. Monomer.

It localises to the cytoplasm. It catalyses the reaction GTP + H2O = GDP + phosphate + H(+). Functionally, GTP hydrolase that promotes the GTP-dependent binding of aminoacyl-tRNA to the A-site of ribosomes during protein biosynthesis. The protein is Elongation factor Tu 2 of Albidiferax ferrireducens (strain ATCC BAA-621 / DSM 15236 / T118) (Rhodoferax ferrireducens).